We begin with the raw amino-acid sequence, 575 residues long: Serine/threonine-protein kinase STY46 (575 aa).

Residues 116 to 140 (ADLDSTSNDAGHSSPTRKSIHPPPA) are disordered. Over residues 118 to 132 (LDSTSNDAGHSSPTR) the composition is skewed to polar residues. Positions 178-252 (EITFSTEDKP…AKIELQSQSW (75 aa)) constitute an ACT domain. The 254-residue stretch at 290 to 543 (LKFGHKIASG…EIIEQLQEIA (254 aa)) folds into the Protein kinase domain. ATP is bound by residues 296–304 (IASGSYGDL) and Lys-317. Asp-411 (proton acceptor) is an active-site residue. Phosphothreonine is present on Thr-443.

This sequence belongs to the protein kinase superfamily. Ser/Thr protein kinase family. Post-translationally, autophosphorylated on serine and threonine residues. Autophosphorylated at Thr-443.

It localises to the cytoplasm. It is found in the cytosol. It catalyses the reaction L-seryl-[protein] + ATP = O-phospho-L-seryl-[protein] + ADP + H(+). The catalysed reaction is L-threonyl-[protein] + ATP = O-phospho-L-threonyl-[protein] + ADP + H(+). Its activity is regulated as follows. Activated by autophosphorylation at Thr-443. In terms of biological role, serine/threonine protein kinase that specifically phosphorylates chloroplast precursor proteins in the cytosol within the cleavable presequences (transit peptides). May be part of a cytosolic regulatory network involved in chloroplast protein import. Does not phosphorylate mitochondrion precursor proteins. Specific for ATP and does not utilize other NTPs. Plays a role in chloroplast biogenesis and differentiation in cotyledons, possibly through phosphorylation of chloroplast preproteins. The sequence is that of Serine/threonine-protein kinase STY46 from Arabidopsis thaliana (Mouse-ear cress).